The primary structure comprises 137 residues: Thionin-like protein 1 (137 aa).

The N-terminal stretch at 1 to 23 (MEDKRVAMLVVMMLVMGNMLIEA) is a signal peptide.

Belongs to the plant thionin (TC 1.C.44) family. Is disulfide-linked.

It localises to the secreted. May be involved in plant defense. The protein is Thionin-like protein 1 of Arabidopsis thaliana (Mouse-ear cress).